The primary structure comprises 486 residues: Pentatricopeptide repeat-containing protein At3g06430, chloroplastic (486 aa).

The transit peptide at 1–36 (MASMSLSFSSSLCSSRIPEGKRRFRHRDVGIVRCVL) directs the protein to the chloroplast. PPR repeat units follow at residues 123–157 (KEGTYMKLLVLLGKSGQPNRAQKLFDEMLEEGLEP), 158–188 (TVELYTALLAAYTRSNLIDDAFSILDKMKSF), 194–228 (DVFTYSTLLKACVDASQFDLVDSLYKEMDERLITP), 229–264 (NTVTQNIVLSGYGRVGRFDQMEKVLSDMLVSTACKP), 265–299 (DVWTMNIILSVFGNMGKIDMMESWYEKFRNFGIEP), 300–334 (ETRTFNILIGSYGKKRMYDKMSSVMEYMRKLEFPW), 335–369 (TTSTYNNIIEAFADVGDAKNMELTFDQMRSEGMKA), 370–404 (DTKTFCCLINGYANAGLFHKVISSVQLAAKFEIPE), 405–439 (NTAFYNAVISACAKADDLIEMERVYIRMKERQCVC), and 440–470 (DSRTFEIMVEAYEKEGMNDKIYYLEQERQKL).

This sequence belongs to the PPR family. P subfamily.

Its subcellular location is the plastid. The protein resides in the chloroplast. The sequence is that of Pentatricopeptide repeat-containing protein At3g06430, chloroplastic (EMB2750) from Arabidopsis thaliana (Mouse-ear cress).